The primary structure comprises 627 residues: E3 ubiquitin-protein ligase DTX1 (627 aa).

2 consecutive WWE domains span residues 14-94 (GLGF…PVRR) and 95-171 (NFYD…RLRR). Disordered stretches follow at residues 222 to 254 (QRRK…ALVV), 269 to 327 (PATG…ALPV), and 368 to 398 (PPVS…KSKN). 2 stretches are compositionally biased toward pro residues: residues 230-248 (PAAP…PGGP) and 275-287 (EPAP…PRSP). The short motif at 240–243 (PPPL) is the SH3-binding element. A compositionally biased stretch (polar residues) spans 296 to 314 (PGQNNLSRPGPQRSTSVSA). Residues 386–396 (RKTKKKHLKKS) are compositionally biased toward basic residues. The segment at 418 to 479 (CTICMERLVT…DGSLQCPTCK (62 aa)) adopts an RING-type zinc-finger fold.

Belongs to the Deltex family. Homodimer. May form a heterodimer with other members of the Deltex family. Interacts with NOTCH1 via its N-terminal region and EIF3F, the interaction is required for NOTCH1 deubiquitination. Interacts with EP300. Forms a heterodimer with BBAP; the heterodimerization leading to an increase of in vitro ubiquitin ligase activity. Interacts with ITCH. In terms of processing, ubiquitinated; undergoes 'Lys-29'-linked polyubiquitination catalyzed by ITCH. In terms of tissue distribution, predominantly expressed in the brain and testis. Weakly expressed in the thymus, spleen and ovary. Predominantly expressed in regions containing post-mitotic differentiating neurons.

The protein resides in the cytoplasm. It localises to the nucleus. The catalysed reaction is S-ubiquitinyl-[E2 ubiquitin-conjugating enzyme]-L-cysteine + [acceptor protein]-L-lysine = [E2 ubiquitin-conjugating enzyme]-L-cysteine + N(6)-ubiquitinyl-[acceptor protein]-L-lysine.. It participates in protein modification; protein ubiquitination. In terms of biological role, regulator of Notch signaling, a signaling pathway involved in cell-cell communications that regulates a broad spectrum of cell-fate determinations. Mainly acts as a positive regulator of Notch, but it also acts as a negative regulator, depending on the developmental and cell context. Mediates the antineural activity of Notch, possibly by inhibiting the transcriptional activation mediated by MATCH1. Involved in neurogenesis, lymphogenesis and myogenesis, and may also be involved in MZB (Marginal zone B) cell differentiation. Promotes B-cell development at the expense of T-cell development, suggesting that it can antagonize NOTCH1. Functions as an ubiquitin ligase protein in vivo, mediating ubiquitination and promoting degradation of MEKK1, suggesting that it may regulate the Notch pathway via some ubiquitin ligase activity. In Mus musculus (Mouse), this protein is E3 ubiquitin-protein ligase DTX1 (Dtx1).